A 380-amino-acid polypeptide reads, in one-letter code: L-lactate dehydrogenase (380 aa).

In terms of domain architecture, FMN hydroxy acid dehydrogenase spans 1 to 380 (MIISSTTDFR…DRSILAKTDR (380 aa)). A substrate-binding site is contributed by Tyr24. The FMN site is built by Ser106 and Gln127. Tyr129 contributes to the substrate binding site. Thr155 is an FMN binding site. Arg164 contributes to the substrate binding site. Lys251 contributes to the FMN binding site. Residue His275 is the Proton acceptor of the active site. A substrate-binding site is contributed by Arg278. 306–330 (DGGVRSGLDVVRMLALGAKGVLLGR) serves as a coordination point for FMN.

Belongs to the FMN-dependent alpha-hydroxy acid dehydrogenase family. Requires FMN as cofactor.

It localises to the cell inner membrane. It catalyses the reaction (S)-lactate + A = pyruvate + AH2. Its function is as follows. Catalyzes the conversion of L-lactate to pyruvate. Is coupled to the respiratory chain. This chain is L-lactate dehydrogenase, found in Caulobacter sp. (strain K31).